The primary structure comprises 228 residues: Large ribosomal subunit protein uL3 (228 aa).

The protein belongs to the universal ribosomal protein uL3 family. In terms of assembly, part of the 50S ribosomal subunit. Forms a cluster with proteins L14 and L19.

One of the primary rRNA binding proteins, it binds directly near the 3'-end of the 23S rRNA, where it nucleates assembly of the 50S subunit. The chain is Large ribosomal subunit protein uL3 from Leuconostoc mesenteroides subsp. mesenteroides (strain ATCC 8293 / DSM 20343 / BCRC 11652 / CCM 1803 / JCM 6124 / NCDO 523 / NBRC 100496 / NCIMB 8023 / NCTC 12954 / NRRL B-1118 / 37Y).